Consider the following 34-residue polypeptide: Thermomycolin (34 aa).

Catalysis depends on S33, which acts as the Charge relay system.

It belongs to the peptidase S8 family.

Its subcellular location is the secreted. The enzyme catalyses Rather non-specific hydrolysis of proteins. Preferential cleavage: -Ala-|-Xaa-, -Tyr-|-Xaa-, -Phe-|-Xaa- in small molecular substrates.. Its function is as follows. This is an extracellular proteinase with a general specificity for apolar residues. The polypeptide is Thermomycolin (Malbranchea cinnamomea (Thermophilic fungus)).